A 220-amino-acid polypeptide reads, in one-letter code: Thiopurine S-methyltransferase (220 aa).

S-adenosyl-L-methionine is bound by residues Trp10, Leu45, Glu66, and Arg123.

The protein belongs to the class I-like SAM-binding methyltransferase superfamily. TPMT family.

The protein localises to the cytoplasm. The enzyme catalyses S-adenosyl-L-methionine + a thiopurine = S-adenosyl-L-homocysteine + a thiopurine S-methylether.. In Pseudomonas syringae pv. syringae (strain B728a), this protein is Thiopurine S-methyltransferase.